Reading from the N-terminus, the 101-residue chain is UPF0473 protein str1961 (101 aa).

This sequence belongs to the UPF0473 family.

The protein is UPF0473 protein str1961 of Streptococcus thermophilus (strain CNRZ 1066).